Here is a 1063-residue protein sequence, read N- to C-terminus: Probable hemoglobin and hemoglobin-haptoglobin-binding protein 1 (1063 aa).

An N-terminal signal peptide occupies residues 1–24 (MTNFKFSLLACSIAFALNASIAYA). 7 consecutive repeat copies span residues 26–29 (QPTN), 30–33 (QPTN), 34–37 (QPTN), 38–41 (QPTN), 42–45 (QPTN), 46–49 (QPTN), and 50–53 (QPTN). A 7 X 4 AA tandem repeats of Q-P-T-N region spans residues 26-53 (QPTNQPTNQPTNQPTNQPTNQPTNQPTN). Residues 28-55 (TNQPTNQPTNQPTNQPTNQPTNQPTNQN) show a composition bias toward low complexity. Residues 28–57 (TNQPTNQPTNQPTNQPTNQPTNQPTNQNSN) form a disordered region. A TonB box motif is present at residues 63–70 (EQINVSGS). The 135-residue stretch at 66–200 (NVSGSSENIN…LGGSVIFETK (135 aa)) folds into the TBDR plug domain. The 856-residue stretch at 208–1063 (DKDYYLSYKR…NYRMSVQFEF (856 aa)) folds into the TBDR beta-barrel domain. Positions 1046–1063 (NRFYAPGRNYRMSVQFEF) match the TonB C-terminal box motif.

It belongs to the TonB-dependent receptor family. Hemoglobin/haptoglobin binding protein subfamily.

The protein resides in the cell outer membrane. Functionally, acts as a receptor for hemoglobin or the hemoglobin/haptoglobin complex of the human host and is required for heme uptake. This chain is Probable hemoglobin and hemoglobin-haptoglobin-binding protein 1, found in Haemophilus influenzae (strain ATCC 51907 / DSM 11121 / KW20 / Rd).